Reading from the N-terminus, the 121-residue chain is Large ribosomal subunit protein uL14 (121 aa).

Belongs to the universal ribosomal protein uL14 family. In terms of assembly, part of the 50S ribosomal subunit. Forms a cluster with proteins L3 and L19. In the 70S ribosome, L14 and L19 interact and together make contacts with the 16S rRNA in bridges B5 and B8.

Its function is as follows. Binds to 23S rRNA. Forms part of two intersubunit bridges in the 70S ribosome. The polypeptide is Large ribosomal subunit protein uL14 (Aquifex pyrophilus).